The sequence spans 375 residues: Trans-enoyl reductase cghC (375 aa).

V48 to K51 serves as a coordination point for NADP(+). Residue N135 to W142 coordinates substrate. NADP(+) contacts are provided by residues S188–T191, S211–N214, and L276–D277. G297–V301 is a binding site for substrate. NADP(+) is bound at residue V366–S367.

It belongs to the zinc-containing alcohol dehydrogenase family. Monomer.

The catalysed reaction is (2S,4S)-4-hydroxy-4-methylglutamate + 8 malonyl-CoA + 3 S-adenosyl-L-methionine + ATP + 8 NADPH + 11 H(+) = (2S)-3-[(2S)-3,5-dioxo-4-[(2E,4R,6R,8E,10E,12E)-4,6,12-trimethyltetradeca-2,8,10,12-tetraenoyl]pyrrolidin-2-yl]-2-hydroxy-2-methylpropanoate + AMP + 3 S-adenosyl-L-homocysteine + 8 CO2 + diphosphate + 8 NADP(+) + 8 CoA + 6 H2O. Its pathway is secondary metabolite biosynthesis. Its function is as follows. Trans-enoyl reductase; part of the gene cluster that mediates the biosynthesis of the tetramic acid Sch210972, a potential anti-HIV fungal natural product that contains a decalin core. The PKS module of cghG together with the enoylreductase cghC catalyze the formation of the polyketide unit which is then conjugated to 4-hydroxyl-4-methyl glutamate (HMG) by the condensation domain of the cghG NRPS module. One unique structural feature of Sch210972 is the tetramic acid motif proposed to be derived from the non-proteinogenic amino acid HMG, by a Dieckmann-type condensation catalyzed by the reductase domain of cghG. The aldolase cghB catalyzes the aldol condensation of 2 molecules of pyruvic acid to yield the intermediate 4-hydroxyl-4-methyl-2-oxoglutarate (HMOG), which can then be stereoselectively transaminated by an unidentified enzyme to form HMG. The Diels-Alderase cghA then uses the Dieckmann product released by cghG as substrate and catalyzes the Diels-Alder cycloaddition to form the decalin ring of Sch210972. CghA also suppresses the nonenzymatic formation of the alternative stereoisomer. This is Trans-enoyl reductase cghC from Chaetomium globosum (strain ATCC 6205 / CBS 148.51 / DSM 1962 / NBRC 6347 / NRRL 1970) (Soil fungus).